Consider the following 738-residue polypeptide: 1,4-alpha-glucan branching enzyme GlgB (738 aa).

The Nucleophile role is filled by Asp399. Glu452 serves as the catalytic Proton donor.

The protein belongs to the glycosyl hydrolase 13 family. GlgB subfamily. As to quaternary structure, monomer.

It carries out the reaction Transfers a segment of a (1-&gt;4)-alpha-D-glucan chain to a primary hydroxy group in a similar glucan chain.. It participates in glycan biosynthesis; glycogen biosynthesis. In terms of biological role, catalyzes the formation of the alpha-1,6-glucosidic linkages in glycogen by scission of a 1,4-alpha-linked oligosaccharide from growing alpha-1,4-glucan chains and the subsequent attachment of the oligosaccharide to the alpha-1,6 position. In Chlamydia trachomatis serovar L2b (strain UCH-1/proctitis), this protein is 1,4-alpha-glucan branching enzyme GlgB.